The following is a 347-amino-acid chain: NAD-dependent alcohol dehydrogenase (347 aa).

Lysine 11 is subject to N6-methyllysine; partial. 7 residues coordinate Zn(2+): cysteine 38, histidine 68, glutamate 98, cysteine 101, cysteine 104, cysteine 112, and cysteine 154. Lysine 213 is subject to N6-methyllysine; partial.

This sequence belongs to the zinc-containing alcohol dehydrogenase family. In terms of assembly, homodimer and homotetramer. Zn(2+) is required as a cofactor.

The enzyme catalyses a primary alcohol + NAD(+) = an aldehyde + NADH + H(+). The catalysed reaction is a secondary alcohol + NAD(+) = a ketone + NADH + H(+). This chain is NAD-dependent alcohol dehydrogenase (adh), found in Saccharolobus solfataricus (strain ATCC 35092 / DSM 1617 / JCM 11322 / P2) (Sulfolobus solfataricus).